The following is a 284-amino-acid chain: Pantothenate synthetase (284 aa).

30 to 37 (MGNLHDGH) contacts ATP. The active-site Proton donor is the histidine 37. Residue glutamine 61 participates in (R)-pantoate binding. Glutamine 61 contributes to the beta-alanine binding site. Residue 149–152 (GEKD) coordinates ATP. Position 155 (glutamine 155) interacts with (R)-pantoate. Residues valine 178 and 186 to 189 (LSSR) contribute to the ATP site.

The protein belongs to the pantothenate synthetase family. As to quaternary structure, homodimer.

The protein resides in the cytoplasm. The enzyme catalyses (R)-pantoate + beta-alanine + ATP = (R)-pantothenate + AMP + diphosphate + H(+). Its pathway is cofactor biosynthesis; (R)-pantothenate biosynthesis; (R)-pantothenate from (R)-pantoate and beta-alanine: step 1/1. In terms of biological role, catalyzes the condensation of pantoate with beta-alanine in an ATP-dependent reaction via a pantoyl-adenylate intermediate. This is Pantothenate synthetase from Klebsiella pneumoniae subsp. pneumoniae (strain ATCC 700721 / MGH 78578).